The chain runs to 179 residues: Large ribosomal subunit protein uL5 (179 aa).

Belongs to the universal ribosomal protein uL5 family. Part of the 50S ribosomal subunit; part of the 5S rRNA/L5/L18/L25 subcomplex. Contacts the 5S rRNA and the P site tRNA. Forms a bridge to the 30S subunit in the 70S ribosome.

This is one of the proteins that bind and probably mediate the attachment of the 5S RNA into the large ribosomal subunit, where it forms part of the central protuberance. In the 70S ribosome it contacts protein S13 of the 30S subunit (bridge B1b), connecting the 2 subunits; this bridge is implicated in subunit movement. Contacts the P site tRNA; the 5S rRNA and some of its associated proteins might help stabilize positioning of ribosome-bound tRNAs. This chain is Large ribosomal subunit protein uL5, found in Synechococcus sp. (strain RCC307).